A 282-amino-acid polypeptide reads, in one-letter code: Major surface antigen 4 (282 aa).

The N-terminal stretch at 1–29 (MNYRELFTGGLSAATVCACSLLVSGAVVA) is a signal peptide.

It belongs to the surface antigen msp4 family.

This chain is Major surface antigen 4 (msp4), found in Anaplasma marginale.